We begin with the raw amino-acid sequence, 239 residues long: Retrotransposon Gag-like protein 6 (239 aa).

The stretch at 29–69 (LTSLRLTNSALRREASTLRAEKANLTNMLESVMAELTLLRT) forms a coiled coil. Residues 82 to 94 (PISSITSNGTRPM) are compositionally biased toward polar residues. Disordered regions lie at residues 82 to 106 (PISS…EPFS) and 214 to 239 (TGPC…ARNL). Positions 228–239 (PAPALPARARNL) are enriched in low complexity.

This sequence belongs to the LDOC1 family.

This chain is Retrotransposon Gag-like protein 6, found in Homo sapiens (Human).